We begin with the raw amino-acid sequence, 101 residues long: uncharacterized protein (101 aa).

The next 3 helical transmembrane spans lie at 10–32, 45–67, and 77–99; these read FLPN…FFLY, LGIW…LPLI, and IAFT…ILSH.

It is found in the cell membrane. This is an uncharacterized protein from Bacillus subtilis (strain 168).